Consider the following 285-residue polypeptide: Diphthine methyl ester synthase (285 aa).

Residues Leu-9, Asp-84, Gly-87, 112–113 (SI), and Leu-163 each bind S-adenosyl-L-methionine. A Phosphoserine modification is found at Ser-171. S-adenosyl-L-methionine contacts are provided by Val-225 and His-250.

The protein belongs to the diphthine synthase family.

The catalysed reaction is 2-[(3S)-amino-3-carboxypropyl]-L-histidyl-[translation elongation factor 2] + 4 S-adenosyl-L-methionine = diphthine methyl ester-[translation elongation factor 2] + 4 S-adenosyl-L-homocysteine + 3 H(+). It participates in protein modification; peptidyl-diphthamide biosynthesis. Its function is as follows. S-adenosyl-L-methionine-dependent methyltransferase that catalyzes four methylations of the modified target histidine residue in translation elongation factor 2 (EF-2), to form an intermediate called diphthine methyl ester. The four successive methylation reactions represent the second step of diphthamide biosynthesis. The chain is Diphthine methyl ester synthase (DPH5) from Homo sapiens (Human).